A 179-amino-acid chain; its full sequence is Large ribosomal subunit protein uL6 (179 aa).

Belongs to the universal ribosomal protein uL6 family. As to quaternary structure, part of the 50S ribosomal subunit.

Its function is as follows. This protein binds to the 23S rRNA, and is important in its secondary structure. It is located near the subunit interface in the base of the L7/L12 stalk, and near the tRNA binding site of the peptidyltransferase center. This chain is Large ribosomal subunit protein uL6, found in Acidobacterium capsulatum (strain ATCC 51196 / DSM 11244 / BCRC 80197 / JCM 7670 / NBRC 15755 / NCIMB 13165 / 161).